The chain runs to 241 residues: Agamous-like MADS-box protein AP1 (241 aa).

The MADS-box domain maps to 1-61 (MGRGRVQLKR…GKLFEYSTDS (61 aa)). The 91-residue stretch at 88 to 178 (QGNWSLEYSK…AKEIKEKEKT (91 aa)) folds into the K-box domain.

As to expression, expressed in tendrils and flowers.

Its subcellular location is the nucleus. Functionally, probable transcription factor involved in flower development. This Vitis vinifera (Grape) protein is Agamous-like MADS-box protein AP1.